Reading from the N-terminus, the 232-residue chain is Ribose-5-phosphate isomerase A (232 aa).

Substrate is bound by residues 28–31, 83–86, and 96–99; these read TGST, DGAD, and KGGG. Glu105 functions as the Proton acceptor in the catalytic mechanism. Lys123 provides a ligand contact to substrate.

Belongs to the ribose 5-phosphate isomerase family. As to quaternary structure, homodimer.

It catalyses the reaction aldehydo-D-ribose 5-phosphate = D-ribulose 5-phosphate. It participates in carbohydrate degradation; pentose phosphate pathway; D-ribose 5-phosphate from D-ribulose 5-phosphate (non-oxidative stage): step 1/1. Catalyzes the reversible conversion of ribose-5-phosphate to ribulose 5-phosphate. The polypeptide is Ribose-5-phosphate isomerase A (Nitrobacter hamburgensis (strain DSM 10229 / NCIMB 13809 / X14)).